Consider the following 359-residue polypeptide: Guanine nucleotide-binding protein subunit alpha-11 (359 aa).

S-palmitoyl cysteine attachment occurs at residues C9 and C10. Residues 38–359 (RELKLLLLGT…QLNLKEYNLV (322 aa)) form the G-alpha domain. The segment at 41 to 54 (KLLLLGTGESGKST) is G1 motif. GTP-binding positions include 46–53 (GTGESGKS) and 180–183 (LRVR). Mg(2+) is bound at residue S53. Residues 178 to 186 (DVLRVRVPT) form a G2 motif region. A Mg(2+)-binding site is contributed by T186. Residues 201–210 (FRMVDVGGQR) are G3 motif. Positions 270–277 (ILFLNKKD) are G4 motif. Residues 274-277 (NKKD) and A331 each bind GTP. A G5 motif region spans residues 329-334 (TCATDT).

This sequence belongs to the G-alpha family. G(q) subfamily. As to quaternary structure, g proteins are composed of 3 units; alpha, beta and gamma. The alpha chain contains the guanine nucleotide binding site. Interacts with RGS22. Interacts with NTSR1.

Its subcellular location is the cell membrane. It is found in the cytoplasm. It carries out the reaction GTP + H2O = GDP + phosphate + H(+). In terms of biological role, guanine nucleotide-binding proteins (G proteins) function as transducers downstream of G protein-coupled receptors (GPCRs) in numerous signaling cascades. The alpha chain contains the guanine nucleotide binding site and alternates between an active, GTP-bound state and an inactive, GDP-bound state. Signaling by an activated GPCR promotes GDP release and GTP binding. The alpha subunit has a low GTPase activity that converts bound GTP to GDP, thereby terminating the signal. Both GDP release and GTP hydrolysis are modulated by numerous regulatory proteins. Signaling is mediated via phospholipase C-beta-dependent inositol lipid hydrolysis for signal propagation: activates phospholipase C-beta: following GPCR activation, GNA11 activates PLC-beta (PLCB1, PLCB2, PLCB3 or PLCB4), leading to production of diacylglycerol (DAG) and inositol 1,4,5-trisphosphate (IP3). Transduces FFAR4 signaling in response to long-chain fatty acids (LCFAs). Together with GNAQ, required for heart development. In the respiratory epithelium, transmits OXGR1-dependent signals that lead to downstream intracellular Ca(2+) release and mucocilliary clearance of airborne pathogens. The chain is Guanine nucleotide-binding protein subunit alpha-11 (Gna11) from Rattus norvegicus (Rat).